A 283-amino-acid chain; its full sequence is Probable replication-associated protein repA1 (283 aa).

Belongs to the IncFII RepA family.

Its function is as follows. This protein is essential for plasmid replication; it is involved in copy control functions. The sequence is that of Probable replication-associated protein repA1 (repA1) from Buchnera aphidicola subsp. Acyrthosiphon pisum (strain APS) (Acyrthosiphon pisum symbiotic bacterium).